We begin with the raw amino-acid sequence, 122 residues long: Ig heavy chain V region M511 (122 aa).

In terms of domain architecture, Ig-like spans 1-114 (EVKLVESGGG…SYWYFDVWGA (114 aa)).

The chain is Ig heavy chain V region M511 from Mus musculus (Mouse).